A 387-amino-acid chain; its full sequence is tRNA N6-adenosine threonylcarbamoyltransferase (387 aa).

Fe cation-binding residues include histidine 112 and histidine 116. Residues 134–138 (LASGG), aspartate 167, glycine 180, and asparagine 325 each bind substrate. Aspartate 353 is a Fe cation binding site.

This sequence belongs to the KAE1 / TsaD family. Fe(2+) serves as cofactor.

The protein resides in the cytoplasm. The catalysed reaction is L-threonylcarbamoyladenylate + adenosine(37) in tRNA = N(6)-L-threonylcarbamoyladenosine(37) in tRNA + AMP + H(+). Functionally, required for the formation of a threonylcarbamoyl group on adenosine at position 37 (t(6)A37) in tRNAs that read codons beginning with adenine. Is involved in the transfer of the threonylcarbamoyl moiety of threonylcarbamoyl-AMP (TC-AMP) to the N6 group of A37, together with TsaE and TsaB. TsaD likely plays a direct catalytic role in this reaction. In Rickettsia typhi (strain ATCC VR-144 / Wilmington), this protein is tRNA N6-adenosine threonylcarbamoyltransferase.